A 40-amino-acid polypeptide reads, in one-letter code: Potassium channel toxin alpha-KTx 12.2 (40 aa).

Cystine bridges form between C2-C5, C10-C31, C16-C36, and C20-C38.

This sequence belongs to the short scorpion toxin superfamily. Potassium channel inhibitor family. Alpha-KTx 12 subfamily. Expressed by the venom gland.

It is found in the secreted. Inhibits high conductance calcium-activated potassium channels. Reversibly inhibits Shaker B potassium channels. The chain is Potassium channel toxin alpha-KTx 12.2 from Tityus trivittatus (Argentinean scorpion).